A 1035-amino-acid polypeptide reads, in one-letter code: Alpha-mannosidase B (1035 aa).

An N-terminal signal peptide occupies residues 1–20; it reads MGKVLILFLFVLLLITFINC. Residues Asn-19 and Asn-30 are each glycosylated (N-linked (GlcNAc...) asparagine). Zn(2+) is bound by residues His-47 and Asp-49. Asn-63 is a glycosylation site (N-linked (GlcNAc...) asparagine). Residue Asp-161 coordinates Zn(2+). Asp-161 acts as the Nucleophile in catalysis. N-linked (GlcNAc...) asparagine glycans are attached at residues Asn-245, Asn-250, Asn-270, Asn-309, Asn-327, and Asn-438. His-446 contacts Zn(2+). 12 N-linked (GlcNAc...) asparagine glycosylation sites follow: Asn-487, Asn-497, Asn-503, Asn-710, Asn-719, Asn-735, Asn-792, Asn-852, Asn-863, Asn-880, Asn-962, and Asn-993.

It belongs to the glycosyl hydrolase 38 family. Zn(2+) serves as cofactor.

It is found in the secreted. It catalyses the reaction Hydrolysis of terminal, non-reducing alpha-D-mannose residues in alpha-D-mannosides.. This is Alpha-mannosidase B (manB) from Dictyostelium discoideum (Social amoeba).